The chain runs to 134 residues: Retinoid-binding protein 7 (134 aa).

It belongs to the calycin superfamily. Fatty-acid binding protein (FABP) family. As to expression, expressed primarily in kidney, heart and transverse colon. Detected in adult lymph node, appendix, ascending colon, and in fetal heart and spleen.

The protein localises to the cytoplasm. In terms of biological role, intracellular transport of retinol. This Homo sapiens (Human) protein is Retinoid-binding protein 7 (RBP7).